A 713-amino-acid chain; its full sequence is Catalase-peroxidase (713 aa).

Positions tryptophan 77 to tyrosine 200 form a cross-link, tryptophyl-tyrosyl-methioninium (Trp-Tyr) (with M-226). Histidine 78 serves as the catalytic Proton acceptor. The tryptophyl-tyrosyl-methioninium (Tyr-Met) (with W-77) cross-link spans tyrosine 200 to methionine 226. Histidine 241 is a heme b binding site.

Belongs to the peroxidase family. Peroxidase/catalase subfamily. In terms of assembly, homodimer or homotetramer. It depends on heme b as a cofactor. Formation of the three residue Trp-Tyr-Met cross-link is important for the catalase, but not the peroxidase activity of the enzyme.

It catalyses the reaction H2O2 + AH2 = A + 2 H2O. The enzyme catalyses 2 H2O2 = O2 + 2 H2O. In terms of biological role, bifunctional enzyme with both catalase and broad-spectrum peroxidase activity. The polypeptide is Catalase-peroxidase (Natronomonas pharaonis (strain ATCC 35678 / DSM 2160 / CIP 103997 / JCM 8858 / NBRC 14720 / NCIMB 2260 / Gabara) (Halobacterium pharaonis)).